Here is a 129-residue protein sequence, read N- to C-terminus: Small ribosomal subunit protein uS11 (129 aa).

It belongs to the universal ribosomal protein uS11 family. As to quaternary structure, part of the 30S ribosomal subunit. Interacts with proteins S7 and S18. Binds to IF-3.

In terms of biological role, located on the platform of the 30S subunit, it bridges several disparate RNA helices of the 16S rRNA. Forms part of the Shine-Dalgarno cleft in the 70S ribosome. The sequence is that of Small ribosomal subunit protein uS11 from Lawsonia intracellularis (strain PHE/MN1-00).